The chain runs to 35 residues: uncharacterized protein (35 aa).

This is an uncharacterized protein from Haemophilus influenzae (strain ATCC 51907 / DSM 11121 / KW20 / Rd).